The following is a 299-amino-acid chain: Pyridoxal kinase PdxY (299 aa).

Ser18 contributes to the substrate binding site. 2 residues coordinate ATP: Asp120 and Glu157. Asp235 contributes to the substrate binding site.

It belongs to the pyridoxine kinase family. PdxY subfamily. In terms of assembly, homodimer. Requires Mg(2+) as cofactor.

It carries out the reaction pyridoxal + ATP = pyridoxal 5'-phosphate + ADP + H(+). It functions in the pathway cofactor metabolism; pyridoxal 5'-phosphate salvage; pyridoxal 5'-phosphate from pyridoxal: step 1/1. Its function is as follows. Pyridoxal kinase involved in the salvage pathway of pyridoxal 5'-phosphate (PLP). Catalyzes the phosphorylation of pyridoxal to PLP. The polypeptide is Pyridoxal kinase PdxY (Deinococcus geothermalis (strain DSM 11300 / CIP 105573 / AG-3a)).